Here is an 83-residue protein sequence, read N- to C-terminus: Putative snRNP Sm-like protein (83 aa).

One can recognise a Sm domain in the interval 9 to 81; sequence KPMDVLKSAL…VIFVSPSKGD (73 aa).

Belongs to the snRNP Sm proteins family.

The protein is Putative snRNP Sm-like protein of Thermoplasma acidophilum (strain ATCC 25905 / DSM 1728 / JCM 9062 / NBRC 15155 / AMRC-C165).